A 68-amino-acid polypeptide reads, in one-letter code: Large ribosomal subunit protein uL30 (68 aa).

This sequence belongs to the universal ribosomal protein uL30 family. In terms of assembly, part of the 50S ribosomal subunit.

In Bartonella henselae (strain ATCC 49882 / DSM 28221 / CCUG 30454 / Houston 1) (Rochalimaea henselae), this protein is Large ribosomal subunit protein uL30.